Consider the following 92-residue polypeptide: Long neurotoxin 1 (92 aa).

The signal sequence occupies residues 1-21 (MKILLLTLVVVTIVCLDLAYT). Disulfide bonds link C24-C41, C34-C62, C47-C51, C66-C77, and C78-C83.

The protein belongs to the three-finger toxin family. Long-chain subfamily. Type II alpha-neurotoxin sub-subfamily. In terms of tissue distribution, expressed by the venom gland.

It is found in the secreted. Its function is as follows. Binds with high affinity to muscular (alpha-1/CHRNA1) and neuronal (alpha-7/CHRNA7) nicotinic acetylcholine receptor (nAChR) and inhibits acetylcholine from binding to the receptor, thereby impairing neuromuscular and neuronal transmission. The protein is Long neurotoxin 1 of Hydrophis hardwickii (Hardwick's spine-bellied seasnake).